The sequence spans 208 residues: Small ribosomal subunit protein uS5 (208 aa).

The span at 1–19 (MTDSNNQSPNKKTSGSSGA) shows a compositional bias: polar residues. The interval 1–54 (MTDSNNQSPNKKTSGSSGAPTAADGRQENRRSRGEKRGGRRDRRGQERDSEWQE) is disordered. Composition is skewed to basic and acidic residues over residues 25–37 (GRQE…GEKR) and 44–54 (RGQERDSEWQE). The S5 DRBM domain maps to 52–115 (WQERVVQIRR…ADGKKHLVRV (64 aa)).

The protein belongs to the universal ribosomal protein uS5 family. As to quaternary structure, part of the 30S ribosomal subunit. Contacts proteins S4 and S8.

With S4 and S12 plays an important role in translational accuracy. In terms of biological role, located at the back of the 30S subunit body where it stabilizes the conformation of the head with respect to the body. The protein is Small ribosomal subunit protein uS5 of Prochlorococcus marinus (strain NATL1A).